Reading from the N-terminus, the 190-residue chain is Potassium-transporting ATPase KdpC subunit (190 aa).

Residues Thr10 to Gly30 traverse the membrane as a helical segment.

Belongs to the KdpC family. As to quaternary structure, the system is composed of three essential subunits: KdpA, KdpB and KdpC.

The protein resides in the cell inner membrane. Functionally, part of the high-affinity ATP-driven potassium transport (or Kdp) system, which catalyzes the hydrolysis of ATP coupled with the electrogenic transport of potassium into the cytoplasm. This subunit acts as a catalytic chaperone that increases the ATP-binding affinity of the ATP-hydrolyzing subunit KdpB by the formation of a transient KdpB/KdpC/ATP ternary complex. This chain is Potassium-transporting ATPase KdpC subunit, found in Escherichia coli (strain SE11).